The chain runs to 80 residues: Late cornified envelope protein 6A (80 aa).

Residues 1 to 10 (MSQQKQQSWK) show a composition bias toward polar residues. Disordered stretches follow at residues 1 to 21 (MSQQ…SPPQ) and 35 to 60 (GAPH…ARQK).

This sequence belongs to the LCE family.

Functionally, precursors of the cornified envelope of the stratum corneum. The polypeptide is Late cornified envelope protein 6A (LCE6A) (Homo sapiens (Human)).